Reading from the N-terminus, the 294-residue chain is Acetylglutamate kinase (294 aa).

Residues 63-64 (GG), Arg-85, and Asn-188 contribute to the substrate site.

The protein belongs to the acetylglutamate kinase family. ArgB subfamily.

It is found in the cytoplasm. The enzyme catalyses N-acetyl-L-glutamate + ATP = N-acetyl-L-glutamyl 5-phosphate + ADP. Its pathway is amino-acid biosynthesis; L-arginine biosynthesis; N(2)-acetyl-L-ornithine from L-glutamate: step 2/4. Functionally, catalyzes the ATP-dependent phosphorylation of N-acetyl-L-glutamate. This chain is Acetylglutamate kinase, found in Methanococcus maripaludis (strain DSM 14266 / JCM 13030 / NBRC 101832 / S2 / LL).